A 142-amino-acid polypeptide reads, in one-letter code: Regulator of ribonuclease activity B (142 aa).

A disordered region spans residues Pro-117 to Arg-142.

The protein belongs to the RraB family. Interacts with the C-terminal region of Rne.

It is found in the cytoplasm. In terms of biological role, globally modulates RNA abundance by binding to RNase E (Rne) and regulating its endonucleolytic activity. Can modulate Rne action in a substrate-dependent manner by altering the composition of the degradosome. This chain is Regulator of ribonuclease activity B, found in Actinobacillus succinogenes (strain ATCC 55618 / DSM 22257 / CCUG 43843 / 130Z).